The primary structure comprises 158 residues: Phosphopantetheine adenylyltransferase (158 aa).

T10 provides a ligand contact to substrate. ATP-binding positions include 10-11 (TF) and H18. Substrate-binding residues include K42, L74, and R88. Residues 89 to 91 (GIR), E99, and 124 to 130 (WRYLSST) each bind ATP.

Belongs to the bacterial CoaD family. Homohexamer. Mg(2+) serves as cofactor.

Its subcellular location is the cytoplasm. It carries out the reaction (R)-4'-phosphopantetheine + ATP + H(+) = 3'-dephospho-CoA + diphosphate. It participates in cofactor biosynthesis; coenzyme A biosynthesis; CoA from (R)-pantothenate: step 4/5. Reversibly transfers an adenylyl group from ATP to 4'-phosphopantetheine, yielding dephospho-CoA (dPCoA) and pyrophosphate. This Actinobacillus pleuropneumoniae serotype 5b (strain L20) protein is Phosphopantetheine adenylyltransferase.